The primary structure comprises 72 residues: Osmotically-inducible lipoprotein B (72 aa).

The signal sequence occupies residues M1–A23. A lipid anchor (N-palmitoyl cysteine) is attached at C24. Residue C24 is the site of S-diacylglycerol cysteine attachment.

Its subcellular location is the cell membrane. Provides resistance to osmotic stress. May be important for stationary-phase survival. The sequence is that of Osmotically-inducible lipoprotein B (osmB) from Escherichia coli O157:H7.